The primary structure comprises 371 residues: Gustatory receptor-like 65a (371 aa).

Residues Met1–Gln13 lie on the Cytoplasmic side of the membrane. Residues Phe14 to Ser34 traverse the membrane as a helical segment. Residues Lys35 to Ser42 lie on the Extracellular side of the membrane. Residues Gly43–Thr63 form a helical membrane-spanning segment. Residues Thr64–Gln72 are Cytoplasmic-facing. Residues Ala73–Leu93 traverse the membrane as a helical segment. The Extracellular portion of the chain corresponds to Glu94–His126. A helical transmembrane segment spans residues Leu127–Ile147. The Cytoplasmic segment spans residues Ser148–Ser161. A helical transmembrane segment spans residues Val162–Ile182. The Extracellular portion of the chain corresponds to Cys183–His251. A helical membrane pass occupies residues Phe252–Ala272. Over Lys273–Gly277 the chain is Cytoplasmic. The chain crosses the membrane as a helical span at residues Phe278–Leu298. The Extracellular segment spans residues Ser299 to Ile371.

It is found in the cell membrane. In Drosophila melanogaster (Fruit fly), this protein is Gustatory receptor-like 65a.